Reading from the N-terminus, the 677-residue chain is Fermitin family homolog 1 (677 aa).

The FERM domain maps to 96-653 (MLRLRLPNAK…HEYIGGYIFL (558 aa)). Residues 157–181 (KEPVIEDILNLESSSTSSGSPVSPG) form a disordered region. Positions 169–181 (SSSTSSGSPVSPG) are enriched in low complexity. Phosphoserine is present on residues Ser170 and Ser179. The region spanning 377–473 (KLFRPKKLML…WMAACILASK (97 aa)) is the PH domain.

It belongs to the kindlin family. As to quaternary structure, interacts with the cytoplasmic domain of integrins ITGB1 and ITGB3.

It localises to the cytoplasm. Its subcellular location is the cytoskeleton. It is found in the cell junction. The protein localises to the focal adhesion. The protein resides in the cell projection. It localises to the ruffle membrane. In terms of biological role, involved in cell adhesion. Contributes to integrin activation. When coexpressed with talin, potentiates activation of ITGA2B. Required for normal keratinocyte proliferation. Required for normal polarization of basal keratinocytes in skin, and for normal cell shape. Required for normal adhesion of keratinocytes to fibronectin and laminin, and for normal keratinocyte migration to wound sites. The chain is Fermitin family homolog 1 (Fermt1) from Mus musculus (Mouse).